We begin with the raw amino-acid sequence, 666 residues long: Asperfuranone cluster transcription factor afoA (666 aa).

The segment at residues 16–43 is a DNA-binding region (zn(2)-C6 fungal-type); the sequence is CEECRRRKARCDRVRPKCGFCTENELQC. Disordered regions lie at residues 184–206 and 347–373; these read LSFDLLNETPPPPSTTTTTSTTR and AGSDRQLSPPSSSPPSSLTLSPSGENA. Positions 353 to 369 are enriched in low complexity; the sequence is LSPPSSSPPSSLTLSPS.

The protein resides in the nucleus. Transcription factor that regulates the expression of the gene cluster that mediates the biosynthesis of asperfuranone, a probable antitumor agent. This is Asperfuranone cluster transcription factor afoA from Emericella nidulans (strain FGSC A4 / ATCC 38163 / CBS 112.46 / NRRL 194 / M139) (Aspergillus nidulans).